The following is a 319-amino-acid chain: UPF0761 membrane protein PBPRA3489 (319 aa).

6 helical membrane passes run 50 to 70 (LVPM…FAGL), 107 to 127 (VGIG…DHAL), 143 to 163 (FSIY…SIAV), 188 to 208 (ALPV…VPNL), 215 to 235 (ALLG…GFAL), and 249 to 269 (ALAV…IVLL).

It belongs to the UPF0761 family.

The protein localises to the cell inner membrane. The protein is UPF0761 membrane protein PBPRA3489 of Photobacterium profundum (strain SS9).